We begin with the raw amino-acid sequence, 159 residues long: uncharacterized protein (159 aa).

This sequence belongs to the SufE family.

This is an uncharacterized protein from Synechocystis sp. (strain ATCC 27184 / PCC 6803 / Kazusa).